The sequence spans 1180 residues: Protocadherin-12 (1180 aa).

The N-terminal stretch at 1–17 (MMLLLPFLLGLLGPGSY) is a signal peptide. The Extracellular segment spans residues 18 to 716 (LFISGDCQEV…HEPGVLSTPA (699 aa)). Cadherin domains follow at residues 28–135 (ATVM…QPQF), 136–244 (PKDE…SPVF), 245–352 (AESS…APSI), 355–460 (TWAS…APVF), and 461–565 (EKSR…APEV). N-linked (GlcNAc...) asparagine glycans are attached at residues N265 and N415. 3 N-linked (GlcNAc...) asparagine glycosylation sites follow: N582, N659, and N662. The region spanning 600–711 (PAGTGIPPKA…LRDSAHEPGV (112 aa)) is the Cadherin 6 domain. The chain crosses the membrane as a helical span at residues 717 to 737 (LALICLAVLLAIFGLLLALFV). Topologically, residues 738–1180 (SICRTERKDN…ESRLGCGRNL (443 aa)) are cytoplasmic. Disordered regions lie at residues 857–930 (NASR…GPHQ) and 973–1026 (QFQP…PEED). S859 is subject to Phosphoserine. Residues 904-918 (PASSATLRRQRNFNG) are compositionally biased toward polar residues. Residues 1014–1026 (PDLEEGPPSPEED) show a composition bias toward acidic residues. Residue S1064 is modified to Phosphoserine. Residues 1076-1093 (SSPDATTSEEPRTFQTFG) are compositionally biased toward polar residues. Disordered regions lie at residues 1076–1104 (SSPD…ELSP) and 1156–1180 (SGAS…GRNL).

N-glycosylated. Post-translationally, cleaved by ADAM10 close to the transmembrane domain to release the Protocadherin-12, secreted form in the serum. Cleavage results in reduced cellular adhesion in a cell migration assay. As to expression, expressed in endothelial cells: localizes in vasculogenic rather than angiogenic endothelium. Strongly expressed in a subset of invasive cells of the placenta, named glycogen-rich trophoblasts cells (at protein level). glycogen-rich trophoblasts cells originate from the from the ectoplacental cone where they rapidly form tight islets (at protein level). In adult mice, present at high level in mesangial cells of kidney glomeruli, while expression was not detected in other types of perivascular cells.

It is found in the cell membrane. Its subcellular location is the cell junction. The protein resides in the secreted. Its function is as follows. Cellular adhesion molecule that may play an important role in cell-cell interactions at interendothelial junctions. Acts as a regulator of cell migration, probably via increasing cell-cell adhesion. Promotes homotypic calcium-dependent aggregation and adhesion and clusters at intercellular junctions. Unable to bind to catenins, weakly associates with the cytoskeleton. The chain is Protocadherin-12 from Mus musculus (Mouse).